The chain runs to 139 residues: MRTLWILAVLQVGVEGHLLQFETMIIKMTKQTGLFSYSFYGCYCGWGGHGRPQDPTDRCCFVHDCCYGKVTNCDPKAAAYSYTIENGGIVCGGDDPCKKQICECDRAAAMCFRDNLDTYNYAKYWKFSAKDCQEESDPC.

Residues 1-16 form the signal peptide; the sequence is MRTLWILAVLQVGVEG. Intrachain disulfides connect Cys42-Cys132, Cys44-Cys60, Cys59-Cys111, Cys65-Cys139, Cys66-Cys104, Cys73-Cys97, and Cys91-Cys102. Ca(2+) contacts are provided by Tyr43, Gly45, and Gly47. Residue His63 is part of the active site. Ca(2+) is bound at residue Asp64. The active site involves Asp105.

As to quaternary structure, homodimer. Requires Ca(2+) as cofactor. In terms of tissue distribution, expressed by the venom gland.

The protein resides in the secreted. It catalyses the reaction a 1,2-diacyl-sn-glycero-3-phosphocholine + H2O = a 1-acyl-sn-glycero-3-phosphocholine + a fatty acid + H(+). In terms of biological role, snake venom phospholipase A2 (PLA2) that inhibits ADP-induced platelet aggregation. PLA2 catalyzes the calcium-dependent hydrolysis of the 2-acyl groups in 3-sn-phosphoglycerides. This chain is Acidic phospholipase A2 H1E6, found in Calloselasma rhodostoma (Malayan pit viper).